We begin with the raw amino-acid sequence, 486 residues long: Glutamyl-tRNA(Gln) amidotransferase subunit A (486 aa).

Residues Lys79 and Ser154 each act as charge relay system in the active site. Residue Ser178 is the Acyl-ester intermediate of the active site.

This sequence belongs to the amidase family. GatA subfamily. Heterotrimer of A, B and C subunits.

The enzyme catalyses L-glutamyl-tRNA(Gln) + L-glutamine + ATP + H2O = L-glutaminyl-tRNA(Gln) + L-glutamate + ADP + phosphate + H(+). In terms of biological role, allows the formation of correctly charged Gln-tRNA(Gln) through the transamidation of misacylated Glu-tRNA(Gln) in organisms which lack glutaminyl-tRNA synthetase. The reaction takes place in the presence of glutamine and ATP through an activated gamma-phospho-Glu-tRNA(Gln). The chain is Glutamyl-tRNA(Gln) amidotransferase subunit A from Dehalococcoides mccartyi (strain ATCC BAA-2100 / JCM 16839 / KCTC 5957 / BAV1).